Consider the following 434-residue polypeptide: UDP-N-acetylglucosamine 1-carboxyvinyltransferase (434 aa).

22-23 (KN) is a phosphoenolpyruvate binding site. A UDP-N-acetyl-alpha-D-glucosamine-binding site is contributed by Arg97. Asp121 acts as the Proton donor in catalysis. The UDP-N-acetyl-alpha-D-glucosamine site is built by Asp319 and Met341.

It belongs to the EPSP synthase family. MurA subfamily.

Its subcellular location is the cytoplasm. The enzyme catalyses phosphoenolpyruvate + UDP-N-acetyl-alpha-D-glucosamine = UDP-N-acetyl-3-O-(1-carboxyvinyl)-alpha-D-glucosamine + phosphate. The protein operates within cell wall biogenesis; peptidoglycan biosynthesis. Cell wall formation. Adds enolpyruvyl to UDP-N-acetylglucosamine. In Bacteroides fragilis (strain ATCC 25285 / DSM 2151 / CCUG 4856 / JCM 11019 / LMG 10263 / NCTC 9343 / Onslow / VPI 2553 / EN-2), this protein is UDP-N-acetylglucosamine 1-carboxyvinyltransferase.